The chain runs to 130 residues: Organic solute transporter subunit beta (130 aa).

Over 1–35 the chain is Extracellular; the sequence is MNYSEKLTGAPPMTEVPLELLEEMLWFFRVEDATP. A helical transmembrane segment spans residues 36–56; sequence WNCSMFVLAALVAIISFILLG. Residues 57–130 are Cytoplasmic-facing; the sequence is RNIQANRNQK…HLPDPQEPES (74 aa). The interval 99-130 is disordered; sequence LSEKPTLAQGEMEAKCSDVPRVHLPDPQEPES. The segment covering 110-124 has biased composition (basic and acidic residues); sequence MEAKCSDVPRVHLPD.

This sequence belongs to the OST-beta family. Interacts with SLC51A. The Ost-alpha/Ost-beta complex is a heterodimer composed of alpha (SLC51A) and beta (SLC51B) subunit; induces the transport of SLC51A from the endoplasmic reticulum to the plasma membrane.

The protein resides in the cell membrane. It catalyses the reaction taurocholate(out) = taurocholate(in). The enzyme catalyses estrone 3-sulfate(out) = estrone 3-sulfate(in). It carries out the reaction dehydroepiandrosterone 3-sulfate(out) = dehydroepiandrosterone 3-sulfate(in). The catalysed reaction is tauroursodeoxycholate(out) = tauroursodeoxycholate(in). It catalyses the reaction glycoursodeoxycholate(out) = glycoursodeoxycholate(in). The enzyme catalyses glycocholate(out) = glycocholate(in). It carries out the reaction taurochenodeoxycholate(out) = taurochenodeoxycholate(in). The catalysed reaction is glycochenodeoxycholate(out) = glycochenodeoxycholate(in). It catalyses the reaction taurodeoxycholate(out) = taurodeoxycholate(in). The enzyme catalyses glycodeoxycholate(out) = glycodeoxycholate(in). It carries out the reaction prostaglandin E2(out) = prostaglandin E2(in). In terms of biological role, essential component of the Ost-alpha/Ost-beta complex, a heterodimer that acts as the intestinal basolateral transporter responsible for bile acid export from enterocytes into portal blood. The Ost-alpha/Ost-beta complex efficiently transports the major species of bile acids (taurocholate). Taurine conjugates are transported more efficiently across the basolateral membrane than glycine-conjugated bile acids. Can also transport steroids such as estrone 3-sulfate and dehydroepiandrosterone 3-sulfate, therefore playing a role in the enterohepatic circulation of sterols. Able to transport eicosanoids such as prostaglandin E2. Modulates SLC51A glycosylation, membrane trafficking and stability activities. This Bos taurus (Bovine) protein is Organic solute transporter subunit beta (SLC51B).